A 182-amino-acid polypeptide reads, in one-letter code: Ribosome maturation factor RimM (182 aa).

Residues 103 to 182 form the PRC barrel domain; sequence GDDYYWKDLM…VIEADWDPGF (80 aa).

Belongs to the RimM family. As to quaternary structure, binds ribosomal protein uS19.

It localises to the cytoplasm. An accessory protein needed during the final step in the assembly of 30S ribosomal subunit, possibly for assembly of the head region. Essential for efficient processing of 16S rRNA. May be needed both before and after RbfA during the maturation of 16S rRNA. It has affinity for free ribosomal 30S subunits but not for 70S ribosomes. The protein is Ribosome maturation factor RimM of Serratia proteamaculans (strain 568).